The primary structure comprises 758 residues: MVRTKNQSSSSSASSSSTKSPIKSSSGAGSSGGGVGGRQSTHRSSSASNVAAVVAGGSSAAGGGSSSNRRSPGSSPDGDDDTTTTDDLTPTTCSPRSGHHHTYGGYSSSVHKQNLYVVSFPIIFLFNVLRSLIYQLFCIFRYLYGASTKVIYRPHRRDCNIEIVVQNSSKEQQQSLNHPSELSREGDGQEQQLSNQPQRFRPIQPLEMAANRPGGGYSPGPGDPLLAKQKHHHRRAFEYISKALKIDEENEGHKELAIELYRKGIKELEDGIAVDCWSGRGDVWDRAQRLHDKMQTNLSMARDRLHFLALREQDLQMQRLSLKEKPKVQAPSKPQKTREPMLAGMTNEPMKLRVRSSGYGPKATTSAQPTASGRKLTIGSKRPVNLAVANKSQTLPRNLGSKTSVGAVQRQPAKTAATPPAVRRQFSSGRNTPPQRSRTPINNNGPSGSGASTPVVSVKGVEQKLVQLILDEIVEGGAKVEWTDIAGQDVAKQALQEMVILPSVRPELFTGLRAPAKGLLLFGPPGNGKTLLARAVATECSATFLNISAASLTSKYVGDGEKLVRALFAVARHMQPSIIFIDEVDSLLSERSSSEHEASRRLKTEFLVEFDGLPGNPDGDRIVVLAATNRPQELDEAALRRFTKRVYVSLPDEQTRELLLNRLLQKQGSPLDTEALRRLAKITDGYSGSDLTALAKDAALEPIRELNVEQVKCLDISAMRAITEQDFHSSLKRIRRSVAPQSLNSYEKWSQDYGDITI.

The segment at 1–99 is disordered; that stretch reads MVRTKNQSSS…PTTCSPRSGH (99 aa). Residues 1–121 lie on the Cytoplasmic side of the membrane; the sequence is MVRTKNQSSS…KQNLYVVSFP (121 aa). Positions 1–210 are required for localization to punctate cytoplasmic foci; the sequence is MVRTKNQSSS…RPIQPLEMAA (210 aa). Low complexity-rich tracts occupy residues 8-28, 43-58, 66-76, and 85-95; these read SSSSSASSSSTKSPIKSSSGA, RSSSASNVAAVVAGGS, SSNRRSPGSSP, and TDDLTPTTCSP. Residues 122 to 142 constitute an intramembrane region (helical); that stretch reads IIFLFNVLRSLIYQLFCIFRY. Residues 143–758 are Cytoplasmic-facing; the sequence is LYGASTKVIY…WSQDYGDITI (616 aa). Polar residues-rich tracts occupy residues 169–180 and 189–198; these read SKEQQQSLNHPS and QEQQLSNQPQ. The segment at 169–203 is disordered; sequence SKEQQQSLNHPSELSREGDGQEQQLSNQPQRFRPI. The sufficient for interaction with microtubules and microtubule severing stretch occupies residues 208–758; the sequence is MAANRPGGGY…WSQDYGDITI (551 aa). Residues 233 to 308 form the MIT domain; the sequence is HRRAFEYISK…SMARDRLHFL (76 aa). Disordered stretches follow at residues 353-375 and 390-454; these read RVRSSGYGPKATTSAQPTASGRK and NKSQ…ASTP. 2 stretches are compositionally biased toward polar residues: residues 390-406 and 425-454; these read NKSQTLPRNLGSKTSVG and QFSSGRNTPPQRSRTPINNNGPSGSGASTP. Residues 443–455 are required for interaction with microtubules; that stretch reads NNGPSGSGASTPV. 523 to 530 serves as a coordination point for ATP; the sequence is GPPGNGKT.

Belongs to the AAA ATPase family. Spastin subfamily. Homohexamer. The homohexamer is stabilized by ATP-binding. The homohexamer may adopt a ring conformation through which microtubules pass prior to being severed. Interacts with microtubules. Interacts with atl; may be involved in microtubule dynamics.

The protein resides in the membrane. The protein localises to the cytoplasm. It is found in the cytoskeleton. It localises to the microtubule organizing center. Its subcellular location is the centrosome. The protein resides in the chromosome. The protein localises to the lipid droplet. The enzyme catalyses n ATP + n H2O + a microtubule = n ADP + n phosphate + (n+1) alpha/beta tubulin heterodimers.. Its function is as follows. ATP-dependent microtubule severing protein. Stimulates microtubule minus-end depolymerization and poleward microtubule flux in the mitotic spindle. Regulates microtubule stability in the neuromuscular junction synapse. Involved in lipid metabolism by regulating the size and distribution of lipid droplets. Involved in axon regeneration by regulating microtubule severing. The sequence is that of Spastin from Drosophila erecta (Fruit fly).